The primary structure comprises 158 residues: Transcriptional regulator MraZ (158 aa).

2 consecutive SpoVT-AbrB domains span residues N7–V54 and V84–R127.

It belongs to the MraZ family. Forms oligomers.

It localises to the cytoplasm. The protein localises to the nucleoid. The protein is Transcriptional regulator MraZ of Bacteroides fragilis (strain ATCC 25285 / DSM 2151 / CCUG 4856 / JCM 11019 / LMG 10263 / NCTC 9343 / Onslow / VPI 2553 / EN-2).